The following is a 358-amino-acid chain: Putative UDP-kanosamine synthase oxidoreductase subunit (358 aa).

Interacts with RifK.

The catalysed reaction is UDP-alpha-D-glucose + NAD(+) = UDP-3-oxo-alpha-D-glucose + NADH + H(+). It functions in the pathway antibiotic biosynthesis; rifamycin B biosynthesis. Its function is as follows. In a complex with RifK, RifL may catalyze the oxidation of UDP-glucose to UDP-3-keto-D-glucose, which would then be used by RifK to produce UDP-kanosamine. Is not able to use dTDP-glucose as substrate. This Amycolatopsis mediterranei (strain S699) (Nocardia mediterranei) protein is Putative UDP-kanosamine synthase oxidoreductase subunit (rifL).